Consider the following 173-residue polypeptide: Adenine phosphoribosyltransferase (173 aa).

Belongs to the purine/pyrimidine phosphoribosyltransferase family. Homodimer.

The protein resides in the cytoplasm. The enzyme catalyses AMP + diphosphate = 5-phospho-alpha-D-ribose 1-diphosphate + adenine. It participates in purine metabolism; AMP biosynthesis via salvage pathway; AMP from adenine: step 1/1. Functionally, catalyzes a salvage reaction resulting in the formation of AMP, that is energically less costly than de novo synthesis. This is Adenine phosphoribosyltransferase from Solibacter usitatus (strain Ellin6076).